Here is a 568-residue protein sequence, read N- to C-terminus: uncharacterized protein (568 aa).

Residues 334 to 346 (DDNEEKNNDRPKI) are compositionally biased toward basic and acidic residues. Disordered stretches follow at residues 334 to 382 (DDNE…NDQN) and 436 to 479 (QVEE…SCKN). Over residues 458–477 (KIASSASKNDNSNNKNSKSC) the composition is skewed to low complexity.

It to yeast YJL043w.

This is an uncharacterized protein from Saccharomyces cerevisiae (strain ATCC 204508 / S288c) (Baker's yeast).